The following is a 308-amino-acid chain: Ribosomal RNA small subunit methyltransferase H (308 aa).

S-adenosyl-L-methionine-binding positions include Ala32–His34, Asp52, Phe79, Asp100, and Gln107.

It belongs to the methyltransferase superfamily. RsmH family.

It localises to the cytoplasm. The catalysed reaction is cytidine(1402) in 16S rRNA + S-adenosyl-L-methionine = N(4)-methylcytidine(1402) in 16S rRNA + S-adenosyl-L-homocysteine + H(+). In terms of biological role, specifically methylates the N4 position of cytidine in position 1402 (C1402) of 16S rRNA. This is Ribosomal RNA small subunit methyltransferase H from Mycoplasma mycoides subsp. mycoides SC (strain CCUG 32753 / NCTC 10114 / PG1).